The chain runs to 1535 residues: ABC multidrug transporter atrF (1535 aa).

Positions 1–115 (MADDHRQPEA…DEQASSTDEY (115 aa)) are disordered. The N-linked (GlcNAc...) asparagine glycan is linked to asparagine 33. Positions 34-45 (TTSTSETDASAD) are enriched in low complexity. The span at 46–76 (ADARWGERNQGDPVSRRGAMEEFEEMRREVT) shows a compositional bias: basic and acidic residues. A compositionally biased stretch (basic residues) spans 79 to 93 (SLHRTRSAKDARRRS). N-linked (GlcNAc...) asparagine glycans are attached at residues asparagine 149, asparagine 274, asparagine 287, and asparagine 351. One can recognise an ABC transporter 1 domain in the interval 185–427 (VPALHFGKRP…FVDLGFYCPE (243 aa)). The next 7 helical transmembrane spans lie at 540 to 560 (LYTK…LFYG), 573 to 593 (GALF…MPAV), 618 to 638 (VVVD…IVYF), 646 to 666 (ASKF…ITSL), 680 to 700 (AVRF…YVIP), 703 to 723 (GLID…LSYS), and 791 to 811 (FGVV…AAEV). Residues 834–868 (KAQNGKGNDEEQVQNTGDNAALSRGEAKSSSSGEA) form a disordered region. The ABC transporter 2 domain occupies 879–1117 (FTWSNVEYTV…DVIKYFADRG (239 aa)). A glycan (N-linked (GlcNAc...) asparagine) is linked at asparagine 892. 915–922 (GASGAGKT) is an ATP binding site. Helical transmembrane passes span 1212–1232 (YGKL…FWML), 1246–1266 (IFLI…KFYI), 1295–1315 (IPMA…PVGF), 1320–1340 (SSAG…ASWG), 1342–1362 (WICA…FFFV), and 1384–1406 (WMYY…FPSV). N-linked (GlcNAc...) asparagine glycosylation is present at asparagine 1459. The next 2 membrane-spanning stretches (helical) occupy residues 1477-1497 (CFGI…FFIY) and 1503-1523 (GWSF…EGVK).

The protein belongs to the ABC transporter superfamily. ABCG family. PDR (TC 3.A.1.205) subfamily.

The protein resides in the cell membrane. It catalyses the reaction voriconazole(in) + ATP + H2O = voriconazole(out) + ADP + phosphate + H(+). In terms of biological role, pleiotropic ABC efflux transporter involved in the basal level of azole susceptibility. Confers resistance to voriconazole. The sequence is that of ABC multidrug transporter atrF from Aspergillus flavus (strain ATCC 200026 / FGSC A1120 / IAM 13836 / NRRL 3357 / JCM 12722 / SRRC 167).